Reading from the N-terminus, the 106-residue chain is Small ribosomal subunit protein uS10 (106 aa).

Belongs to the universal ribosomal protein uS10 family. In terms of assembly, part of the 30S ribosomal subunit.

Involved in the binding of tRNA to the ribosomes. The sequence is that of Small ribosomal subunit protein uS10 from Prochlorococcus marinus (strain MIT 9211).